We begin with the raw amino-acid sequence, 143 residues long: Antitumor antibiotic C-1027 apoprotein (143 aa).

An N-terminal signal peptide occupies residues 1-33 (MSLRHMSRRASRFGVVAVASIGLAAAAQSVAFA). Disulfide bonds link C69-C78 and C119-C124.

This sequence belongs to the neocarzinostatin family.

Functionally, binds non-covalently to a chromophore which is the cytotoxic and mutagenic component of the antibiotic. The chromophore binds to DNA as a weak intercalator and causes single- and double-strand breaks. This is Antitumor antibiotic C-1027 apoprotein (cagA) from Streptomyces globisporus.